The following is a 695-amino-acid chain: Phosphate acetyltransferase (695 aa).

Positions 372 to 695 (AFRYRLVKRA…LTAVQAASQR (324 aa)) are phosphate acetyltransferase.

The protein in the N-terminal section; belongs to the CobB/CobQ family. It in the C-terminal section; belongs to the phosphate acetyltransferase and butyryltransferase family. In terms of assembly, homohexamer.

The protein localises to the cytoplasm. It catalyses the reaction acetyl-CoA + phosphate = acetyl phosphate + CoA. Its pathway is metabolic intermediate biosynthesis; acetyl-CoA biosynthesis; acetyl-CoA from acetate: step 2/2. Involved in acetate metabolism. This Nitrosomonas europaea (strain ATCC 19718 / CIP 103999 / KCTC 2705 / NBRC 14298) protein is Phosphate acetyltransferase (pta).